Consider the following 716-residue polypeptide: Epidermal growth factor receptor kinase substrate 8-like protein 1 (716 aa).

The PTB domain occupies 35–164 (QYHVNHLVTF…LQNYRSGRGE (130 aa)). 5 disordered regions span residues 175 to 194 (EELR…QRRP), 203 to 249 (VEPS…GPEL), 404 to 472 (PGVE…ETES), 528 to 582 (YNIL…SLDP), and 600 to 628 (SRLA…PRSE). Ser182 carries the phosphoserine modification. Thr187 is modified (phosphothreonine). The span at 435-446 (PWEDPVEKQLQH) shows a compositional bias: basic and acidic residues. Residues 453 to 464 (QSAPQVAVNGQQ) are compositionally biased toward polar residues. The 60-residue stretch at 477–536 (KARKWVLCNYDFQARNGSELSVKHRDVLEVLDDRRKWWKVRDHQGQEGYVPYNILTPHPG) folds into the SH3 domain. The span at 553–563 (TPPPPPAPAPA) shows a compositional bias: pro residues. Residues 682–713 (VQRALLEDREKVSELEAVMEKQKKKVEGETKT) are a coiled coil.

It belongs to the EPS8 family. In terms of assembly, interacts with ABI1. Part of a complex that contains SOS1, ABI1 and EPS8L2. Associates with F-actin. Detected in placenta, skin, mammary gland, bone marrow and stomach.

The protein localises to the cytoplasm. Stimulates guanine exchange activity of SOS1. May play a role in membrane ruffling and remodeling of the actin cytoskeleton. In Mus musculus (Mouse), this protein is Epidermal growth factor receptor kinase substrate 8-like protein 1 (Eps8l1).